Here is a 310-residue protein sequence, read N- to C-terminus: Porphobilinogen deaminase (310 aa).

Residue Cys242 is modified to S-(dipyrrolylmethanemethyl)cysteine.

This sequence belongs to the HMBS family. As to quaternary structure, monomer. The cofactor is dipyrromethane.

The catalysed reaction is 4 porphobilinogen + H2O = hydroxymethylbilane + 4 NH4(+). It functions in the pathway porphyrin-containing compound metabolism; protoporphyrin-IX biosynthesis; coproporphyrinogen-III from 5-aminolevulinate: step 2/4. Tetrapolymerization of the monopyrrole PBG into the hydroxymethylbilane pre-uroporphyrinogen in several discrete steps. This chain is Porphobilinogen deaminase, found in Shewanella baltica (strain OS223).